Consider the following 300-residue polypeptide: Sulfate adenylyltransferase subunit 2 (300 aa).

It belongs to the PAPS reductase family. CysD subfamily. In terms of assembly, heterodimer composed of CysD, the smaller subunit, and CysN.

The enzyme catalyses sulfate + ATP + H(+) = adenosine 5'-phosphosulfate + diphosphate. Its pathway is sulfur metabolism; hydrogen sulfide biosynthesis; sulfite from sulfate: step 1/3. In terms of biological role, with CysN forms the ATP sulfurylase (ATPS) that catalyzes the adenylation of sulfate producing adenosine 5'-phosphosulfate (APS) and diphosphate, the first enzymatic step in sulfur assimilation pathway. APS synthesis involves the formation of a high-energy phosphoric-sulfuric acid anhydride bond driven by GTP hydrolysis by CysN coupled to ATP hydrolysis by CysD. This Magnetococcus marinus (strain ATCC BAA-1437 / JCM 17883 / MC-1) protein is Sulfate adenylyltransferase subunit 2.